Here is a 406-residue protein sequence, read N- to C-terminus: Tubby-like F-box protein 11 (406 aa).

One can recognise an F-box domain in the interval 53 to 108 (SCWTQLPPELLREVLARVEESEGWWPRRRDVVACAGVCRSWRGIVREIVRTPEASG).

It belongs to the TUB family. As to expression, ubiquitous.

The protein is Tubby-like F-box protein 11 (TULP11) of Oryza sativa subsp. japonica (Rice).